We begin with the raw amino-acid sequence, 341 residues long: Elongation factor Ts, mitochondrial 2 (341 aa).

A mitochondrion-targeting transit peptide spans 1-17 (MLAARFASRAFPRTRLY).

Belongs to the EF-Ts family.

It localises to the mitochondrion. Its function is as follows. Associates with the EF-Tu.GDP complex and induces the exchange of GDP to GTP. It remains bound to the aminoacyl-tRNA.EF-Tu.GTP complex up to the GTP hydrolysis stage on the ribosome. This is Elongation factor Ts, mitochondrial 2 from Postia placenta (strain ATCC 44394 / Madison 698-R) (Brown rot fungus).